A 97-amino-acid chain; its full sequence is YcgL domain-containing protein PST_1364 (97 aa).

Residues 3–87 (LICSIYKSPR…AEDEYIEHLP (85 aa)) enclose the YcgL domain.

This chain is YcgL domain-containing protein PST_1364, found in Stutzerimonas stutzeri (strain A1501) (Pseudomonas stutzeri).